Here is an 89-residue protein sequence, read N- to C-terminus: Small ribosomal subunit protein uS15 (89 aa).

The protein belongs to the universal ribosomal protein uS15 family. As to quaternary structure, part of the 30S ribosomal subunit. Forms a bridge to the 50S subunit in the 70S ribosome, contacting the 23S rRNA.

Functionally, one of the primary rRNA binding proteins, it binds directly to 16S rRNA where it helps nucleate assembly of the platform of the 30S subunit by binding and bridging several RNA helices of the 16S rRNA. In terms of biological role, forms an intersubunit bridge (bridge B4) with the 23S rRNA of the 50S subunit in the ribosome. This is Small ribosomal subunit protein uS15 from Acinetobacter baumannii (strain AB307-0294).